The sequence spans 231 residues: Small ribosomal subunit protein uS3 (231 aa).

Residues 17 to 86 enclose the KH type-2 domain; it reads VEQYLNKELK…SPQVEVQQVA (70 aa).

This sequence belongs to the universal ribosomal protein uS3 family. As to quaternary structure, part of the 30S ribosomal subunit.

Functionally, binds the lower part of the 30S subunit head. The protein is Small ribosomal subunit protein uS3 of Methanocorpusculum labreanum (strain ATCC 43576 / DSM 4855 / Z).